Reading from the N-terminus, the 547-residue chain is CTP synthase (547 aa).

The amidoligase domain stretch occupies residues 1–265 (MARFIFITGG…DQAVLDAFGI (265 aa)). S13 provides a ligand contact to CTP. Residue S13 coordinates UTP. ATP contacts are provided by residues 14 to 19 (SLGKGL) and D71. Residues D71 and E139 each contribute to the Mg(2+) site. CTP is bound by residues 146-148 (DIE), 186-191 (KTKPTQ), and K222. Residues 186–191 (KTKPTQ) and K222 contribute to the UTP site. One can recognise a Glutamine amidotransferase type-1 domain in the interval 291 to 546 (KVAIVGKYTQ…VRAAKENSRL (256 aa)). G353 contributes to the L-glutamine binding site. The Nucleophile; for glutamine hydrolysis role is filled by C380. L-glutamine-binding positions include 381–384 (LGMQ), E404, and R474. Active-site residues include H519 and E521.

The protein belongs to the CTP synthase family. As to quaternary structure, homotetramer.

The enzyme catalyses UTP + L-glutamine + ATP + H2O = CTP + L-glutamate + ADP + phosphate + 2 H(+). It carries out the reaction L-glutamine + H2O = L-glutamate + NH4(+). It catalyses the reaction UTP + NH4(+) + ATP = CTP + ADP + phosphate + 2 H(+). The protein operates within pyrimidine metabolism; CTP biosynthesis via de novo pathway; CTP from UDP: step 2/2. Allosterically activated by GTP, when glutamine is the substrate; GTP has no effect on the reaction when ammonia is the substrate. The allosteric effector GTP functions by stabilizing the protein conformation that binds the tetrahedral intermediate(s) formed during glutamine hydrolysis. Inhibited by the product CTP, via allosteric rather than competitive inhibition. Catalyzes the ATP-dependent amination of UTP to CTP with either L-glutamine or ammonia as the source of nitrogen. Regulates intracellular CTP levels through interactions with the four ribonucleotide triphosphates. The polypeptide is CTP synthase (Jannaschia sp. (strain CCS1)).